Here is a 226-residue protein sequence, read N- to C-terminus: Large ribosomal subunit protein uL3 (226 aa).

The interval 136–162 (NFGSQRASHGNSRSHNVPGSISMAQDP) is disordered. Residues 137 to 158 (FGSQRASHGNSRSHNVPGSISM) are compositionally biased toward polar residues. N5-methylglutamine is present on Q160.

It belongs to the universal ribosomal protein uL3 family. As to quaternary structure, part of the 50S ribosomal subunit. Forms a cluster with proteins L14 and L19. In terms of processing, methylated by PrmB.

In terms of biological role, one of the primary rRNA binding proteins, it binds directly near the 3'-end of the 23S rRNA, where it nucleates assembly of the 50S subunit. The protein is Large ribosomal subunit protein uL3 of Methylibium petroleiphilum (strain ATCC BAA-1232 / LMG 22953 / PM1).